The primary structure comprises 407 residues: Transcriptional regulator alnR (407 aa).

Positions 23 to 53 form a DNA-binding region, zn(2)-C6 fungal-type; the sequence is SCDTCQEAKVKCSQHKPSCHRCLRHRQPCVY. The disordered stretch occupies residues 53–85; the sequence is YSPQRRSGRPPKRPSPSSRLGPESNNSGDDIHN. Residues 75 to 85 are compositionally biased toward polar residues; sequence ESNNSGDDIHN.

Its subcellular location is the nucleus. Transcriptional regulator involved in the positive regulation of the expression of the gene cluster that mediates the biosynthesis of asperlin, a polyketide showing anti-inflammatory, antitumor and antibiotic activities. This is Transcriptional regulator alnR from Emericella nidulans (strain FGSC A4 / ATCC 38163 / CBS 112.46 / NRRL 194 / M139) (Aspergillus nidulans).